The sequence spans 1141 residues: IgM protease (1141 aa).

The signal sequence occupies residues 1 to 32 (MNIQERFSLRKSAVGLVSVSLLCAIYTSTVAA). C195 functions as the Nucleophile in the catalytic mechanism. Disordered regions lie at residues 518 to 544 (PDLP…STNL), 725 to 749 (EKDS…NVET), 781 to 805 (LEKD…TNVE), and 839 to 860 (EKDS…ESTS). Polar residues predominate over residues 526–544 (STVSDVDSLSSQETSSTNL). Composition is skewed to low complexity over residues 738–749 (EPTSSESTNVET) and 795–805 (EPTSSESTNVE). Residues 1119-1136 (IMGVGLLTLVLGSALGLL) traverse the membrane as a helical segment.

It belongs to the peptidase C66 family.

The protein resides in the cell membrane. The protein localises to the secreted. IgM cleavage is inhibited by iodoacetamide but not by AEBSF, bestatin, E-64, Z-LVG-CHN(2), or EDTA. In terms of biological role, catalyzes the specific cleavage of porcine IgM bound to the bacterial surface. Can degrade only IgM but neither IgG nor IgA, and is host specific, as it exclusively cleaves porcine IgM but not IgM from six other species, including human, mouse and a closely related member of the Suidae family. Promotes survival in porcine blood. Is thus involved in a so-far-unknown mechanism of host-pathogen interaction at an early stage of the host immune response. The polypeptide is IgM protease (ide) (Streptococcus suis (strain P1/7)).